Consider the following 431-residue polypeptide: Serine/threonine-protein kinase Sgk1 (431 aa).

The interval 1–60 is necessary for localization to the mitochondria; that stretch reads MTVKTEAARDTLTYSRMRGMVAILIAFMKQRRMGLNDFIQKIANNSYACKHPEVQSILKI. The segment at 64-92 is disordered; the sequence is QEPELMNANPSPPPSPSQQINLGPSSNPH. Phosphoserine is present on Ser-74. Ser-78 is modified (phosphoserine; by MAPK7). The segment covering 81–91 has biased composition (polar residues); sequence QQINLGPSSNP. Residues 98–355 enclose the Protein kinase domain; it reads FHFLKVIGKG…FMEIKNHVFF (258 aa). Residues 104 to 112 and Lys-127 contribute to the ATP site; that span reads IGKGSFGKV. Positions 131–141 match the Nuclear localization signal motif; sequence KKAILKKKEEK. Asp-222 functions as the Proton acceptor in the catalytic mechanism. Position 256 is a phosphothreonine; by PDPK1 (Thr-256). An AGC-kinase C-terminal domain is found at 356 to 431; it reads SLINWEDLIN…SYAPPMDSFL (76 aa). Phosphothreonine; by PKA is present on Thr-369. Phosphoserine occurs at positions 397, 401, and 422.

This sequence belongs to the protein kinase superfamily. AGC Ser/Thr protein kinase family. As to quaternary structure, homodimer; disulfide-linked. Forms a trimeric complex with FBXW7 and NOTCH1. Interacts with MAPK3/ERK1, MAPK1/ERK2, MAP2K1/MEK1, MAP2K2/MEK2, NEDD4, NEDD4L, MAPT/TAU, MAPK7, CREB1, SLC9A3R2/NHERF2 and KCNJ1/ROMK1. Associates with the mammalian target of rapamycin complex 2 (mTORC2) via an interaction with MAPKAP1/SIN1. Regulated by phosphorylation. Activated by phosphorylation on Ser-422 by mTORC2, transforming it into a substrate for PDPK1 which phosphorylates it on Thr-256. Phosphorylation on Ser-397 and Ser-401 are also essential for its activity. Phosphorylation on Ser-78 by MAPK7 is required for growth factor-induced cell cycle progression. In terms of processing, ubiquitinated by NEDD4L; which promotes proteasomal degradation. Ubiquitinated by SYVN1 at the endoplasmic reticulum; which promotes rapid proteasomal degradation and maintains a high turnover rate in resting cells.

Its subcellular location is the cytoplasm. The protein resides in the nucleus. The protein localises to the endoplasmic reticulum membrane. It localises to the cell membrane. It is found in the mitochondrion. The enzyme catalyses L-seryl-[protein] + ATP = O-phospho-L-seryl-[protein] + ADP + H(+). It catalyses the reaction L-threonyl-[protein] + ATP = O-phospho-L-threonyl-[protein] + ADP + H(+). Two specific sites, one in the kinase domain (Thr-256) and the other in the C-terminal regulatory region (Ser-422), need to be phosphorylated for its full activation. Phosphorylation at Ser-397 and Ser-401 are also essential for its activity. Activated by WNK1, WNK2, WNK3 and WNK4; which promote phosphorylation by mTORC2. Its function is as follows. Serine/threonine-protein kinase which is involved in the regulation of a wide variety of ion channels, membrane transporters, cellular enzymes, transcription factors, neuronal excitability, cell growth, proliferation, survival, migration and apoptosis. Plays an important role in cellular stress response. Contributes to regulation of renal Na(+) retention, renal K(+) elimination, salt appetite, gastric acid secretion, intestinal Na(+)/H(+) exchange and nutrient transport, insulin-dependent salt sensitivity of blood pressure, salt sensitivity of peripheral glucose uptake, cardiac repolarization and memory consolidation. Up-regulates Na(+) channels: SCNN1A/ENAC, SCN5A and ASIC1/ACCN2, K(+) channels: KCNJ1/ROMK1, KCNA1-5, KCNQ1-5 and KCNE1, epithelial Ca(2+) channels: TRPV5 and TRPV6, chloride channels: BSND, CLCN2 and CFTR, glutamate transporters: SLC1A3/EAAT1, SLC1A2 /EAAT2, SLC1A1/EAAT3, SLC1A6/EAAT4 and SLC1A7/EAAT5, amino acid transporters: SLC1A5/ASCT2, SLC38A1/SN1 and SLC6A19, creatine transporter: SLC6A8, Na(+)/dicarboxylate cotransporter: SLC13A2/NADC1, Na(+)-dependent phosphate cotransporter: SLC34A2/NAPI-2B, glutamate receptor: GRIK2/GLUR6. Up-regulates carriers: SLC9A3/NHE3, SLC12A1/NKCC2, SLC12A3/NCC, SLC5A3/SMIT, SLC2A1/GLUT1, SLC5A1/SGLT1 and SLC15A2/PEPT2. Regulates enzymes: GSK3A/B, PMM2 and Na(+)/K(+) ATPase, and transcription factors: CTNNB1 and nuclear factor NF-kappa-B. Stimulates sodium transport into epithelial cells by enhancing the stability and expression of SCNN1A/ENAC. This is achieved by phosphorylating the NEDD4L ubiquitin E3 ligase, promoting its interaction with 14-3-3 proteins, thereby preventing it from binding to SCNN1A/ENAC and targeting it for degradation. Regulates store-operated Ca(+2) entry (SOCE) by stimulating ORAI1 and STIM1. Regulates KCNJ1/ROMK1 directly via its phosphorylation or indirectly via increased interaction with SLC9A3R2/NHERF2. Phosphorylates MDM2 and activates MDM2-dependent ubiquitination of p53/TP53. Phosphorylates MAPT/TAU and mediates microtubule depolymerization and neurite formation in hippocampal neurons. Phosphorylates SLC2A4/GLUT4 and up-regulates its activity. Phosphorylates APBB1/FE65 and promotes its localization to the nucleus. Phosphorylates MAPK1/ERK2 and activates it by enhancing its interaction with MAP2K1/MEK1 and MAP2K2/MEK2. Phosphorylates FBXW7 and plays an inhibitory role in the NOTCH1 signaling. Phosphorylates FOXO1 resulting in its relocalization from the nucleus to the cytoplasm. Phosphorylates FOXO3, promoting its exit from the nucleus and interference with FOXO3-dependent transcription. Phosphorylates BRAF and MAP3K3/MEKK3 and inhibits their activity. Phosphorylates SLC9A3/NHE3 in response to dexamethasone, resulting in its activation and increased localization at the cell membrane. Phosphorylates CREB1. Necessary for vascular remodeling during angiogenesis. In Bos taurus (Bovine), this protein is Serine/threonine-protein kinase Sgk1 (SGK1).